Consider the following 129-residue polypeptide: Lysozyme C (129 aa).

The C-type lysozyme domain occupies Lys-1–Leu-129. 4 disulfides stabilise this stretch: Cys-6–Cys-127, Cys-30–Cys-115, Cys-64–Cys-80, and Cys-76–Cys-94. Residues Glu-35 and Asp-52 contribute to the active site.

It belongs to the glycosyl hydrolase 22 family. Monomer.

The protein localises to the secreted. It carries out the reaction Hydrolysis of (1-&gt;4)-beta-linkages between N-acetylmuramic acid and N-acetyl-D-glucosamine residues in a peptidoglycan and between N-acetyl-D-glucosamine residues in chitodextrins.. In terms of biological role, lysozymes have primarily a bacteriolytic function; those in tissues and body fluids are associated with the monocyte-macrophage system and enhance the activity of immunoagents. This is Lysozyme C (LYZ) from Chrysolophus amherstiae (Lady Amherst's pheasant).